Reading from the N-terminus, the 500-residue chain is Cytochrome P450 2D28 (500 aa).

Cys-446 contacts heme.

The protein belongs to the cytochrome P450 family. Heme is required as a cofactor.

Its subcellular location is the endoplasmic reticulum membrane. It is found in the microsome membrane. The protein is Cytochrome P450 2D28 (CYP2D28A) of Mesocricetus auratus (Golden hamster).